The following is a 446-amino-acid chain: Exodeoxyribonuclease 7 large subunit (446 aa).

This sequence belongs to the XseA family. Heterooligomer composed of large and small subunits.

The protein localises to the cytoplasm. It carries out the reaction Exonucleolytic cleavage in either 5'- to 3'- or 3'- to 5'-direction to yield nucleoside 5'-phosphates.. Its function is as follows. Bidirectionally degrades single-stranded DNA into large acid-insoluble oligonucleotides, which are then degraded further into small acid-soluble oligonucleotides. This Streptococcus thermophilus (strain CNRZ 1066) protein is Exodeoxyribonuclease 7 large subunit.